Here is a 125-residue protein sequence, read N- to C-terminus: PEP-dependent dihydroxyacetone kinase 2, phosphoryl donor subunit DhaM (125 aa).

A PTS EIIA type-4 domain is found at Met-1–His-125. His-9 acts as the Tele-phosphohistidine intermediate in catalysis.

The protein belongs to the PEP-utilizing enzyme family. Homodimer. The dihydroxyacetone kinase complex is composed of a homodimer of DhaM, a homodimer of DhaK and the subunit DhaL.

It localises to the cytoplasm. It carries out the reaction dihydroxyacetone + phosphoenolpyruvate = dihydroxyacetone phosphate + pyruvate. Component of the dihydroxyacetone kinase complex, which is responsible for the phosphoenolpyruvate (PEP)-dependent phosphorylation of dihydroxyacetone. DhaM serves as the phosphoryl donor. Is phosphorylated by phosphoenolpyruvate in an EI- and HPr-dependent reaction, and a phosphorelay system on histidine residues finally leads to phosphoryl transfer to DhaL and dihydroxyacetone. This is PEP-dependent dihydroxyacetone kinase 2, phosphoryl donor subunit DhaM from Listeria innocua serovar 6a (strain ATCC BAA-680 / CLIP 11262).